The following is a 165-amino-acid chain: Neurotrophin-3 (165 aa).

An N-terminal signal peptide occupies residues 1–3 (IQS). The propeptide occupies 4 to 119 (TSMDQGSLSE…VLNRTSRRKR (116 aa)). Asn112 carries an N-linked (GlcNAc...) asparagine glycan.

Belongs to the NGF-beta family.

It localises to the secreted. In terms of biological role, seems to promote the survival of visceral and proprioceptive sensory neurons. In Anilius scytale (Coral cylinder snake), this protein is Neurotrophin-3 (NTF3).